Consider the following 304-residue polypeptide: MSWIERIKSNITPTRKASIPEGVWTKCDSCGQVLYRAELERNLEVCPKCDHHMRMSARNRLHSLLDEGSLVELGSELEPKDVLKFRDSKKYKDRLASAQKETGEKDALVVMKGTLHGMPVVAAAFEFAFMGGSMGSVVGARFVRAVEQALEDNCPLVCFSASGGARMQEALMSLMQMAKTSAALAKMQERGLPYISVLTDPTMGGVSASFAMLGDLNIAEPKALIGFAGPRVIEQTVREKLPPGFQRSEFLIEKGAIDMIVRRPEMRLKLASILAKLMNLPAPNPDAPREGVVVPPAPDQESEV.

Residues 23–292 (VWTKCDSCGQ…PNPDAPREGV (270 aa)) form the CoA carboxyltransferase N-terminal domain. Positions 27, 30, 46, and 49 each coordinate Zn(2+). Residues 27–49 (CDSCGQVLYRAELERNLEVCPKC) form a C4-type zinc finger. The segment at 284–304 (NPDAPREGVVVPPAPDQESEV) is disordered.

The protein belongs to the AccD/PCCB family. In terms of assembly, acetyl-CoA carboxylase is a heterohexamer composed of biotin carboxyl carrier protein (AccB), biotin carboxylase (AccC) and two subunits each of ACCase subunit alpha (AccA) and ACCase subunit beta (AccD). It depends on Zn(2+) as a cofactor.

It is found in the cytoplasm. It catalyses the reaction N(6)-carboxybiotinyl-L-lysyl-[protein] + acetyl-CoA = N(6)-biotinyl-L-lysyl-[protein] + malonyl-CoA. It participates in lipid metabolism; malonyl-CoA biosynthesis; malonyl-CoA from acetyl-CoA: step 1/1. In terms of biological role, component of the acetyl coenzyme A carboxylase (ACC) complex. Biotin carboxylase (BC) catalyzes the carboxylation of biotin on its carrier protein (BCCP) and then the CO(2) group is transferred by the transcarboxylase to acetyl-CoA to form malonyl-CoA. The sequence is that of Acetyl-coenzyme A carboxylase carboxyl transferase subunit beta from Salmonella paratyphi A (strain ATCC 9150 / SARB42).